Here is a 556-residue protein sequence, read N- to C-terminus: Innexin-7 (556 aa).

The next 3 membrane-spanning stretches (helical) occupy residues 21-41 (LVASIHSFLTSNLLVGLAVLI), 127-147 (FFLLFEAACFRLPCFIWKYFA), and 213-233 (AYYVTFIYFVAKVAFLLNVIL). Asn267 carries N-linked (GlcNAc...) asparagine glycosylation. A helical membrane pass occupies residues 310-330 (IFVFLWAWYILLTAFTVGNLF). A disordered region spans residues 431–556 (DESQVESGKN…IPKTAEKKHW (126 aa)). Over residues 435 to 447 (VESGKNTAPSTSH) the composition is skewed to polar residues. Positions 452-461 (RGTEQLEKNV) are enriched in basic and acidic residues. A compositionally biased stretch (polar residues) spans 463 to 474 (SRQGSLSTQLRP). Residues 500–513 (KGSKKPSPTKKKAS) show a composition bias toward basic residues. Low complexity predominate over residues 514 to 527 (SKNSPQSSSNSRRP). The segment covering 539 to 556 (HHHEPDSKIPKTAEKKHW) has biased composition (basic and acidic residues).

The protein belongs to the pannexin family.

Its subcellular location is the cell membrane. The protein resides in the cell junction. The protein localises to the gap junction. In terms of biological role, structural component of the gap junctions. This is Innexin-7 (inx-7) from Caenorhabditis elegans.